A 563-amino-acid chain; its full sequence is CTP synthase (563 aa).

Residues 1–278 (MAKATAKNSA…DLRVLEQLHL (278 aa)) form an amidoligase domain region. A CTP-binding site is contributed by S24. S24 is a binding site for UTP. 25–30 (SLGKGI) is an ATP binding site. Residue Y65 participates in L-glutamine binding. D82 contacts ATP. Mg(2+) contacts are provided by D82 and E151. CTP-binding positions include 158–160 (DIE), 198–203 (KTKPSQ), and K234. UTP is bound by residues 198-203 (KTKPSQ) and K234. 250-252 (KDV) lines the ATP pocket. A Glutamine amidotransferase type-1 domain is found at 303–545 (TIALVGKYIA…VKAALEQKKA (243 aa)). Position 363 (G363) interacts with L-glutamine. C390 acts as the Nucleophile; for glutamine hydrolysis in catalysis. Residues 391–394 (LGMQ), E414, and R471 each bind L-glutamine. Catalysis depends on residues H518 and E520. The disordered stretch occupies residues 542 to 563 (QKKANGKKPTAPSEKTKKTKTK).

This sequence belongs to the CTP synthase family. In terms of assembly, homotetramer.

It catalyses the reaction UTP + L-glutamine + ATP + H2O = CTP + L-glutamate + ADP + phosphate + 2 H(+). It carries out the reaction L-glutamine + H2O = L-glutamate + NH4(+). The enzyme catalyses UTP + NH4(+) + ATP = CTP + ADP + phosphate + 2 H(+). The protein operates within pyrimidine metabolism; CTP biosynthesis via de novo pathway; CTP from UDP: step 2/2. Allosterically activated by GTP, when glutamine is the substrate; GTP has no effect on the reaction when ammonia is the substrate. The allosteric effector GTP functions by stabilizing the protein conformation that binds the tetrahedral intermediate(s) formed during glutamine hydrolysis. Inhibited by the product CTP, via allosteric rather than competitive inhibition. Functionally, catalyzes the ATP-dependent amination of UTP to CTP with either L-glutamine or ammonia as the source of nitrogen. Regulates intracellular CTP levels through interactions with the four ribonucleotide triphosphates. The chain is CTP synthase from Fibrobacter succinogenes (strain ATCC 19169 / S85).